Reading from the N-terminus, the 251-residue chain is Gamma-interferon-inducible lysosomal thiol reductase (251 aa).

An N-terminal signal peptide occupies residues 1-21; it reads MFGFRLSVLLFAVCSLSACSC. The Saposin A-type domain maps to 22 to 60; it reads MFVNSCKYPPSQWCDSRDIAAQCGVLEQCMKFNASPVTV. C68 and C71 form a disulfide bridge. Residue N108 is glycosylated (N-linked (GlcNAc...) asparagine).

It belongs to the GILT family. Dimer; disulfide-linked. In terms of tissue distribution, highly expressed in spleen and kidney. Also detected at lower levels in liver, heart, brain, intestine and gill.

It localises to the secreted. The protein resides in the lysosome. Lysosomal thiol reductase that can reduce protein disulfide bonds. May facilitate the complete unfolding of proteins destined for lysosomal degradation. Plays an important role in antigen processing. The protein is Gamma-interferon-inducible lysosomal thiol reductase of Carassius auratus (Goldfish).